Here is a 446-residue protein sequence, read N- to C-terminus: Exodeoxyribonuclease 7 large subunit (446 aa).

Belongs to the XseA family. Heterooligomer composed of large and small subunits.

The protein resides in the cytoplasm. It carries out the reaction Exonucleolytic cleavage in either 5'- to 3'- or 3'- to 5'-direction to yield nucleoside 5'-phosphates.. In terms of biological role, bidirectionally degrades single-stranded DNA into large acid-insoluble oligonucleotides, which are then degraded further into small acid-soluble oligonucleotides. This chain is Exodeoxyribonuclease 7 large subunit, found in Streptococcus pneumoniae serotype 19F (strain G54).